The primary structure comprises 422 residues: Phagosome assembly factor 1 (422 aa).

The protein belongs to the PHAF1 family. In terms of assembly, interacts with BCAS3; the interaction is requrired for the association with the phagophore.

It is found in the cytoplasm. It localises to the preautophagosomal structure. Plays a regulatory role in autophagic activity. In complex with BCAS3, associates with the autophagosome formation site during both non-selective and selective autophagy. This is Phagosome assembly factor 1 from Mus musculus (Mouse).